The primary structure comprises 663 residues: Leishmanolysin-like peptidase (663 aa).

Residue His246 participates in Zn(2+) binding. Glu247 is an active-site residue. Zn(2+) contacts are provided by His250 and His353.

It belongs to the peptidase M8 family. It depends on Zn(2+) as a cofactor.

It localises to the cytoplasm. Functionally, essential for the coordination of mitotic progression, and also plays a role in cell migration. This Caenorhabditis elegans protein is Leishmanolysin-like peptidase.